An 858-amino-acid chain; its full sequence is Phospholipase D gamma 1 (858 aa).

The C2 domain maps to 27 to 163; the sequence is PFATSSGSLR…CSGNRIEGLF (137 aa). Asp225 serves as a coordination point for Ca(2+). The region spanning 364–399 is the PLD phosphodiesterase 1 domain; it reads TIYTHHQKTVIVDAEAAQNRRKIVAFVGGLDLCNGR. Residues His369, Lys371, and Asp376 contribute to the active site. His369 serves as a coordination point for a 1,2-diacyl-sn-glycero-3-phosphate. Ca(2+)-binding residues include His405 and His437. Position 565 (Gln565) interacts with a 1,2-diacyl-sn-glycero-3-phosphate. The residue at position 680 (Ser680) is a Phosphoserine. The PLD phosphodiesterase 2 domain maps to 704–731; the sequence is FMIYVHSKGMVVDDEFVLIGSANINQRS. Active-site residues include His709, Lys711, and Asp716. His709 contacts a 1,2-diacyl-sn-glycero-3-phosphate. Residue Glu772 coordinates Ca(2+).

Belongs to the phospholipase D family. C2-PLD subfamily. Ca(2+) is required as a cofactor. In terms of tissue distribution, highly expressed in roots and flowers, moderately in stems, leaves and seedlings and low in siliques. Not detected in seeds.

The protein localises to the cytoplasm. It is found in the membrane. It catalyses the reaction a 1,2-diacyl-sn-glycero-3-phosphocholine + H2O = a 1,2-diacyl-sn-glycero-3-phosphate + choline + H(+). With respect to regulation, inhibited by neomycin. Up-regulated by PIP2 binding. In terms of biological role, hydrolyzes glycerol-phospholipids at the terminal phosphodiesteric bond to generate phosphatidic acids (PA). Plays an important role in various cellular processes, including phytohormone action, vesicular trafficking, secretion, cytoskeletal arrangement, meiosis, tumor promotion, pathogenesis, membrane deterioration and senescence. Can use phosphatidylserine (PS) and phosphatidylethanolamine (PE) as substrates only in the presence of PIP2. Can use phosphatidylcholine (PC), phosphatidylglycerol (PG) or N-acylphosphatidylethanolamine (NAPE) as substrates in the presence of PE and PIP2. Involved in membrane lipid modulation under aluminum (Al) stress and negatively modulate plant tolerance to Al. The chain is Phospholipase D gamma 1 from Arabidopsis thaliana (Mouse-ear cress).